A 644-amino-acid chain; its full sequence is uncharacterized protein (644 aa).

Disordered stretches follow at residues 1 to 35 (MSSH…EYCS) and 48 to 106 (GNSH…SHHN). Serine 28 carries the phosphoserine modification. Over residues 58-70 (NGASSSNNNVAKS) the composition is skewed to low complexity. A compositionally biased stretch (polar residues) spans 83 to 106 (YDSTSNSNEPISFNEPDSSNSHHN). The next 12 membrane-spanning stretches (helical) occupy residues 131–151 (ILPL…PLLF), 190–210 (AAFG…YGTM), 218–238 (LVLF…LYQS), 245–265 (YFVL…TVVA), 286–306 (LNFA…GFIV), 314–334 (YVFY…WLIL), 398–418 (VLLA…MGLL), 435–455 (LILS…FPLL), 522–542 (VWNA…LAVA), 546–566 (VALF…PCVQ), 583–603 (AAFA…YAFV), and 614–634 (NMIF…IFFM).

It is found in the membrane. This is an uncharacterized protein from Schizosaccharomyces pombe (strain 972 / ATCC 24843) (Fission yeast).